The chain runs to 310 residues: Methionyl-tRNA formyltransferase (310 aa).

109–112 provides a ligand contact to (6S)-5,6,7,8-tetrahydrofolate; sequence SLLP.

The protein belongs to the Fmt family.

It carries out the reaction L-methionyl-tRNA(fMet) + (6R)-10-formyltetrahydrofolate = N-formyl-L-methionyl-tRNA(fMet) + (6S)-5,6,7,8-tetrahydrofolate + H(+). Functionally, attaches a formyl group to the free amino group of methionyl-tRNA(fMet). The formyl group appears to play a dual role in the initiator identity of N-formylmethionyl-tRNA by promoting its recognition by IF2 and preventing the misappropriation of this tRNA by the elongation apparatus. The polypeptide is Methionyl-tRNA formyltransferase (Chloroflexus aurantiacus (strain ATCC 29366 / DSM 635 / J-10-fl)).